A 383-amino-acid chain; its full sequence is Queuine tRNA-ribosyltransferase (383 aa).

The active-site Proton acceptor is the aspartate 90. Substrate-binding positions include 90–94, aspartate 144, glutamine 193, and glycine 227; that span reads DSGGF. An RNA binding region spans residues 258–264; it reads GVGTPED. Aspartate 277 acts as the Nucleophile in catalysis. Positions 282-286 are RNA binding; important for wobble base 34 recognition; that stretch reads TRNAR. Zn(2+)-binding residues include cysteine 315, cysteine 317, cysteine 320, and histidine 346.

The protein belongs to the queuine tRNA-ribosyltransferase family. As to quaternary structure, homodimer. Within each dimer, one monomer is responsible for RNA recognition and catalysis, while the other monomer binds to the replacement base PreQ1. The cofactor is Zn(2+).

It catalyses the reaction 7-aminomethyl-7-carbaguanine + guanosine(34) in tRNA = 7-aminomethyl-7-carbaguanosine(34) in tRNA + guanine. The protein operates within tRNA modification; tRNA-queuosine biosynthesis. In terms of biological role, catalyzes the base-exchange of a guanine (G) residue with the queuine precursor 7-aminomethyl-7-deazaguanine (PreQ1) at position 34 (anticodon wobble position) in tRNAs with GU(N) anticodons (tRNA-Asp, -Asn, -His and -Tyr). Catalysis occurs through a double-displacement mechanism. The nucleophile active site attacks the C1' of nucleotide 34 to detach the guanine base from the RNA, forming a covalent enzyme-RNA intermediate. The proton acceptor active site deprotonates the incoming PreQ1, allowing a nucleophilic attack on the C1' of the ribose to form the product. After dissociation, two additional enzymatic reactions on the tRNA convert PreQ1 to queuine (Q), resulting in the hypermodified nucleoside queuosine (7-(((4,5-cis-dihydroxy-2-cyclopenten-1-yl)amino)methyl)-7-deazaguanosine). The protein is Queuine tRNA-ribosyltransferase of Ralstonia pickettii (strain 12J).